A 503-amino-acid chain; its full sequence is D-xylose-proton symporter-like 2 (503 aa).

Residues 1-15 show a composition bias toward polar residues; sequence MALDPEQQQPISSVS. Residues 1–32 are disordered; it reads MALDPEQQQPISSVSREFGKSSGEISPEREPL. Position 2 is an N-acetylalanine (Ala-2). Position 26 is a phosphoserine (Ser-26). The next 12 helical transmembrane spans lie at 42 to 62, 99 to 119, 124 to 144, 146 to 166, 187 to 207, 213 to 233, 305 to 325, 346 to 366, 375 to 395, 400 to 420, 437 to 457, and 467 to 487; these read YSVVAAILPFLFPALGGLLYG, GSLYGALFGSIVAFTIADVIG, LILAALLYLVGALVTALAPTY, VLIIGRVIYGVSVGLAMHAAP, FFIVLGMVGGYGIGSLTVNVH, MYATSVPLAVIMGIGMWWLPA, ALIIGGGLVLFQQITGQPSVL, VSILLGLLKLIMTGVAVVVID, LGGVGGMVVSLFLLGSYYLFF, VVAVVALLLYVGCYQLSFGPI, GLSLAVLVNFGANALVTFAFS, and ILFCGFGVICVLSLVFIFFIV.

The protein belongs to the major facilitator superfamily. Sugar transporter (TC 2.A.1.1) family.

It localises to the membrane. The protein is D-xylose-proton symporter-like 2 of Arabidopsis thaliana (Mouse-ear cress).